Here is a 160-residue protein sequence, read N- to C-terminus: MADNARAKRLADLIREVVAQKLQRGIKDPRLGSHVTITDTRVTGDLREATVFYTVYGDDEERKAATAGLESAKGILRSEVGKAAGVKFTPTLTFVMDALPDTARNIEDLLDKARQSDEKVREASAGATYAGEADPYRKPDEDETDTEGAVEADETDDTAK.

Residues 112–122 (KARQSDEKVRE) show a composition bias toward basic and acidic residues. The interval 112–160 (KARQSDEKVREASAGATYAGEADPYRKPDEDETDTEGAVEADETDDTAK) is disordered. The segment covering 141–160 (EDETDTEGAVEADETDDTAK) has biased composition (acidic residues).

The protein belongs to the RbfA family. In terms of assembly, monomer. Binds 30S ribosomal subunits, but not 50S ribosomal subunits or 70S ribosomes.

The protein localises to the cytoplasm. Functionally, one of several proteins that assist in the late maturation steps of the functional core of the 30S ribosomal subunit. Associates with free 30S ribosomal subunits (but not with 30S subunits that are part of 70S ribosomes or polysomes). Required for efficient processing of 16S rRNA. May interact with the 5'-terminal helix region of 16S rRNA. This Streptomyces coelicolor (strain ATCC BAA-471 / A3(2) / M145) protein is Ribosome-binding factor A.